A 186-amino-acid polypeptide reads, in one-letter code: Cell division protein SepF (186 aa).

Residues 24–91 are disordered; it reads EDEEEEERYA…HNPPHLRAVP (68 aa).

This sequence belongs to the SepF family. Homodimer. Interacts with FtsZ.

It localises to the cytoplasm. Functionally, cell division protein that is part of the divisome complex and is recruited early to the Z-ring. Probably stimulates Z-ring formation, perhaps through the cross-linking of FtsZ protofilaments. Its function overlaps with FtsA. In Rubrobacter xylanophilus (strain DSM 9941 / JCM 11954 / NBRC 16129 / PRD-1), this protein is Cell division protein SepF.